Here is a 157-residue protein sequence, read N- to C-terminus: Thioredoxin-T (157 aa).

The region spanning 2–107 is the Thioredoxin domain; the sequence is VYPVRNKDDL…LAKLMEKHAG (106 aa). The cysteines at positions 32 and 35 are disulfide-linked. Residues 132-157 are disordered; the sequence is ESSESDNDNNNVNEVSAHDENAVLEH. A compositionally biased stretch (basic and acidic residues) spans 147–157; that stretch reads SAHDENAVLEH.

The protein belongs to the thioredoxin family. As to expression, testis specific. Not expressed in the embryo. Becomes progressively more strongly expressed during larval and pupal development. In testis, it is strongly expressed in young spermatocytes, and postmeiotic spermatid stages, then expression decreases at the nuclear elongation stage. Strongly expressed in the waste bag, in which material no longer needed for the mature sperm is eliminated. Not expressed in the stem cells and spermatogonial cells.

Its subcellular location is the nucleus. It is found in the chromosome. Probably participates in various redox reactions through the reversible oxidation of its active center dithiol to a disulfide and catalyzes dithiol-disulfide exchange reactions. Its tissue specificity suggests a regulatory role in the germline. The polypeptide is Thioredoxin-T (TrxT) (Drosophila melanogaster (Fruit fly)).